Consider the following 350-residue polypeptide: MAGHEEEDERLISGRRREGEVDAALRPQSLADFVGQRQTRENLGVFVQAARARGEAMDHVLFHGPPGLGKTTLAQIVARELGVGFRGTSGPMIVKAGDLAAILTNLEPRDVLFIDEIHRLNPAIEEVLYPAMEDFQLDLIIGEGPAARSVRIDLPPFTLVGATTRSGLLTTPLRDRFGIPLRLDFYETDELVQIVTRGSRLLGMALTDEGAREVARRSRGTPRVAGRLLRRVRDFAAVAGRSPVDAFIADAALNRLEVDGRGLDAMDRRYLSRMADHYGGGPVGVDTLAAALAEERDTVEDVIEPYLIQQGFIKRTPRGRMLTAIAWTHLGLTPPAETPPVQPDLWSDAP.

A large ATPase domain (RuvB-L) region spans residues 1 to 186 (MAGHEEEDER…FGIPLRLDFY (186 aa)). ATP is bound by residues leucine 25, arginine 26, glycine 67, lysine 70, threonine 71, threonine 72, 133–135 (EDF), arginine 176, tyrosine 186, and arginine 223. Position 71 (threonine 71) interacts with Mg(2+). Residues 187–257 (ETDELVQIVT…IADAALNRLE (71 aa)) form a small ATPAse domain (RuvB-S) region. The head domain (RuvB-H) stretch occupies residues 260–350 (GRGLDAMDRR…VQPDLWSDAP (91 aa)). DNA-binding residues include arginine 296, arginine 315, and arginine 320.

It belongs to the RuvB family. As to quaternary structure, homohexamer. Forms an RuvA(8)-RuvB(12)-Holliday junction (HJ) complex. HJ DNA is sandwiched between 2 RuvA tetramers; dsDNA enters through RuvA and exits via RuvB. An RuvB hexamer assembles on each DNA strand where it exits the tetramer. Each RuvB hexamer is contacted by two RuvA subunits (via domain III) on 2 adjacent RuvB subunits; this complex drives branch migration. In the full resolvosome a probable DNA-RuvA(4)-RuvB(12)-RuvC(2) complex forms which resolves the HJ.

The protein resides in the cytoplasm. It carries out the reaction ATP + H2O = ADP + phosphate + H(+). Functionally, the RuvA-RuvB-RuvC complex processes Holliday junction (HJ) DNA during genetic recombination and DNA repair, while the RuvA-RuvB complex plays an important role in the rescue of blocked DNA replication forks via replication fork reversal (RFR). RuvA specifically binds to HJ cruciform DNA, conferring on it an open structure. The RuvB hexamer acts as an ATP-dependent pump, pulling dsDNA into and through the RuvAB complex. RuvB forms 2 homohexamers on either side of HJ DNA bound by 1 or 2 RuvA tetramers; 4 subunits per hexamer contact DNA at a time. Coordinated motions by a converter formed by DNA-disengaged RuvB subunits stimulates ATP hydrolysis and nucleotide exchange. Immobilization of the converter enables RuvB to convert the ATP-contained energy into a lever motion, pulling 2 nucleotides of DNA out of the RuvA tetramer per ATP hydrolyzed, thus driving DNA branch migration. The RuvB motors rotate together with the DNA substrate, which together with the progressing nucleotide cycle form the mechanistic basis for DNA recombination by continuous HJ branch migration. Branch migration allows RuvC to scan DNA until it finds its consensus sequence, where it cleaves and resolves cruciform DNA. The protein is Holliday junction branch migration complex subunit RuvB of Rhodospirillum rubrum (strain ATCC 11170 / ATH 1.1.1 / DSM 467 / LMG 4362 / NCIMB 8255 / S1).